The following is a 202-amino-acid chain: Imidazoleglycerol-phosphate dehydratase (202 aa).

It belongs to the imidazoleglycerol-phosphate dehydratase family.

It is found in the cytoplasm. It catalyses the reaction D-erythro-1-(imidazol-4-yl)glycerol 3-phosphate = 3-(imidazol-4-yl)-2-oxopropyl phosphate + H2O. It participates in amino-acid biosynthesis; L-histidine biosynthesis; L-histidine from 5-phospho-alpha-D-ribose 1-diphosphate: step 6/9. The chain is Imidazoleglycerol-phosphate dehydratase from Corynebacterium efficiens (strain DSM 44549 / YS-314 / AJ 12310 / JCM 11189 / NBRC 100395).